We begin with the raw amino-acid sequence, 436 residues long: DEAD-box ATP-dependent RNA helicase CshB (436 aa).

Positions 4–32 match the Q motif motif; sequence QTFTQYDFKPFLIDAVRELRFTEPTGIQQ. Residues 35–209 form the Helicase ATP-binding domain; the sequence is FPVVKKGVSV…KKYMENPEHI (175 aa). ATP is bound at residue 48-55; that stretch reads SQTGSGKT. Residues 157–160 carry the DEAD box motif; it reads DEAD. The Helicase C-terminal domain maps to 240 to 388; that stretch reads MLLQFKPYLA…WADLGERRRR (149 aa). Residues 385–436 are disordered; the sequence is RRRRKSRKKPNDELDVMATKVIKKPKKVKPNYKRKLATERDKVKRKYSNKKR. Composition is skewed to basic residues over residues 405-419 and 427-436; these read VIKK…YKRK and VKRKYSNKKR.

This sequence belongs to the DEAD box helicase family. CshB subfamily.

Its subcellular location is the cytoplasm. It catalyses the reaction ATP + H2O = ADP + phosphate + H(+). In terms of biological role, probable DEAD-box RNA helicase. May work in conjunction with the cold shock proteins to ensure proper initiation of transcription at low and optimal temperatures. Unwinds dsRNA in both 5'- and 3'-directions and shows RNA-dependent ATPase activity. Probably has a somewhat redundant function with CshA, as cshA can partially complement the growth effects of a cshB deletion. The sequence is that of DEAD-box ATP-dependent RNA helicase CshB from Bacillus cereus (strain ATCC 14579 / DSM 31 / CCUG 7414 / JCM 2152 / NBRC 15305 / NCIMB 9373 / NCTC 2599 / NRRL B-3711).